The primary structure comprises 5099 residues: Malformin synthetase mlfA (5099 aa).

An adenylation 1 region spans residues 224–615 (QRHAADRPHS…CGRADTQVKL (392 aa)). Residues 756–829 (THLENEIQLA…EAASLAKVRD (74 aa)) form the Carrier 1 domain. Ser-790 bears the O-(pantetheine 4'-phosphoryl)serine mark. The segment at 867–1297 (EDVFPCTSMQ…PVDSLTLLKP (431 aa)) is condensation 1. The interval 1325–1717 (DRWVNRQPDT…GRKDTQVKLR (393 aa)) is adenylation 2. The Carrier 2 domain occupies 1857–1934 (ARAPELERTL…QIATQCEGIA (78 aa)). Ser-1894 bears the O-(pantetheine 4'-phosphoryl)serine mark. The tract at residues 1995 to 2040 (MQQESSSSPAPSVSSSSSSSSAPKPLLAQPEPPTNLRDSVPEPFSL) is disordered. The span at 1999 to 2017 (SSSSPAPSVSSSSSSSSAP) shows a compositional bias: low complexity. Residues 2067 to 2482 (EDIYPATPLQ…ALSPGDKKVL (416 aa)) are condensation 2. The tract at residues 2505 to 2897 (LSTPHAPAVC…VGRKDGQLKL (393 aa)) is adenylation 3. Positions 3032-3108 (RPATAQERGL…RLVLHLQNTS (77 aa)) constitute a Carrier 3 domain. O-(pantetheine 4'-phosphoryl)serine is present on Ser-3069. Condensation stretches follow at residues 3125 to 3589 (WVHL…TYDQ) and 3610 to 4033 (DIYP…QQAM). The interval 4058-4446 (YANREAVCAW…VGRKDSQIKF (389 aa)) is adenylation 4. The Carrier 4 domain occupies 4581-4657 (PPSTGMQQGI…DLAEHISSRV (77 aa)). Ser-4618 is modified (O-(pantetheine 4'-phosphoryl)serine). Residues 4696-5017 (DILPTTGFQR…LQTVVQHQNV (322 aa)) form a condensation 5 region.

The protein belongs to the NRP synthetase family.

The protein operates within secondary metabolite biosynthesis. Functionally, nonribosomal peptide synthetase; part of the gene cluster that mediates the biosynthesis of malformins, cyclic pentapeptides with a disulfide bond between 2 consecutive cysteins, that show potential anti-tumor as well as antimalarial and antitrypanosomal properties. The nonribosomal peptide synthetase mlfA is responsible of the formation of the cyclic pentapeptide. The malformin biosynthesis clusters in malformin-producing fungi also contain enzymes involved in the formation of the disulfide bond between the two consecutive cysteins within malformins, in addition to additional tailoring enzymes such as methyltransferases or oxidoreductases. They are also composed of up to 4 major facilitator superfamily transporters, and transcription factors probably involved in the regulation of the expression of those clusters. This chain is Malformin synthetase mlfA, found in Aspergillus sclerotiicarbonarius (strain CBS 121057 / IBT 28362).